The following is a 640-amino-acid chain: Phosphatidylinositol-binding clathrin assembly protein (640 aa).

Ser-2 carries the post-translational modification N-acetylserine. Residues 14-145 (QHSVTGSAVS…VSYRQVAFDF (132 aa)) enclose the ENTH domain. Phosphoserine occurs at positions 16 and 20. The tract at residues 221–294 (KYFDMKKNQC…LEGKKIKDST (74 aa)) is interaction with PIMREG. Lys-238 is covalently cross-linked (Glycyl lysine isopeptide (Lys-Gly) (interchain with G-Cter in SUMO2)). 2 positions are modified to phosphoserine: Ser-303 and Ser-315. Residues 543 to 568 (NGTTKNDVSCSQPGEKKLTGGSNWQP) form a disordered region. A compositionally biased stretch (polar residues) spans 544–554 (GTTKNDVSCSQ).

Belongs to the PICALM/SNAP91 family. In terms of assembly, binds to clathrin; involves primarily the C-terminal sequences, but the full-length protein is required for full binding capacity. Binds phosphatidylinositol 4,5- bisphosphate. Interacts with PIMREG; this interaction may change the subcellular location into the nucleus. Interacts with AP2A1 (via its alpha-appendage domain). Interacts (via N-terminus) with VAMP2; VAMP3; VAMP7 and VAMP8 (Via N-terminus). Interacts with LC3/MAP1LC3A. As to expression, isoform 2 was found in most tissues examined. Isoform 1 has an overlapping expression pattern but is absent from lung, heart and pancreas. Both isoforms are widely expressed in the brain, higher levels are seen in hippocampus, dentate gyrus, medial habenula nucleus and cerebellar granule cells.

The protein localises to the cell membrane. It localises to the membrane. It is found in the clathrin-coated pit. Its subcellular location is the golgi apparatus. The protein resides in the cytoplasmic vesicle. The protein localises to the clathrin-coated vesicle. It localises to the nucleus. In terms of biological role, cytoplasmic adapter protein that plays a critical role in clathrin-mediated endocytosis which is important in processes such as internalization of cell receptors, synaptic transmission or removal of apoptotic cells. Recruits AP-2 and attaches clathrin triskelions to the cytoplasmic side of plasma membrane leading to clathrin-coated vesicles (CCVs) assembly. Furthermore, regulates clathrin-coated vesicle size and maturation by directly sensing and driving membrane curvature. In addition to binding to clathrin, mediates the endocytosis of small R-SNARES (Soluble NSF Attachment Protein REceptors) between plasma membranes and endosomes including VAMP2, VAMP3, VAMP4, VAMP7 or VAMP8. In turn, PICALM-dependent SNARE endocytosis is required for the formation and maturation of autophagic precursors. Modulates thereby autophagy and the turnover of autophagy substrates such as MAPT/TAU or amyloid precursor protein cleaved C-terminal fragment (APP-CTF). The sequence is that of Phosphatidylinositol-binding clathrin assembly protein (Picalm) from Rattus norvegicus (Rat).